The primary structure comprises 86 residues: DNA-directed RNA polymerase subunit omega (86 aa).

The protein belongs to the RNA polymerase subunit omega family. In terms of assembly, the RNAP catalytic core consists of 2 alpha, 1 beta, 1 beta' and 1 omega subunit. When a sigma factor is associated with the core the holoenzyme is formed, which can initiate transcription.

It catalyses the reaction RNA(n) + a ribonucleoside 5'-triphosphate = RNA(n+1) + diphosphate. Its function is as follows. Promotes RNA polymerase assembly. Latches the N- and C-terminal regions of the beta' subunit thereby facilitating its interaction with the beta and alpha subunits. The protein is DNA-directed RNA polymerase subunit omega of Psychrobacter arcticus (strain DSM 17307 / VKM B-2377 / 273-4).